The following is a 248-amino-acid chain: MLKVIKKYRKFITFLMIGLVYTLAYPATAHAMHIMEGMLPPRWCIFWYAVSLPFFIYGLYRMYKIVNSGVPNAKVMLALCGAFVFVLSSLKLPSVTGSCSHPTGVGLGTVLFGPGVMSVLGVIVLLFQALLLAHGGITTLGANEFSMTIVGPIVGYAVWKLCRAMKVSRSVSLFLCAMFADWSTYVTTAFQLAIVFPDPNGGVAAALIKFLSIYAITQIPLAIAEGLLTVIVYNLVISNDLWKESALQ.

An N-terminal signal peptide occupies residues 1-31; it reads MLKVIKKYRKFITFLMIGLVYTLAYPATAHA. Transmembrane regions (helical) follow at residues 39–59, 75–95, 107–127, 139–159, 173–195, and 213–233; these read LPPR…IYGL, VMLA…LPSV, LGTV…VLLF, TLGA…YAVW, LFLC…LAIV, and IYAI…VIVY.

This sequence belongs to the CbiM family. Forms an energy-coupling factor (ECF) transporter complex composed of an ATP-binding protein (A component, CbiO), a transmembrane protein (T component, CbiQ) and 2 possible substrate-capture proteins (S components, CbiM and CbiN) of unknown stoichimetry.

It is found in the cell membrane. Its pathway is cofactor biosynthesis; adenosylcobalamin biosynthesis. Its function is as follows. Part of the energy-coupling factor (ECF) transporter complex CbiMNOQ involved in cobalt import. The chain is Cobalt transport protein CbiM from Limosilactobacillus reuteri (strain DSM 20016) (Lactobacillus reuteri).